The sequence spans 123 residues: MLPTENRLRRREDFATAVRRGRRAGRPLLVVHLRSGATDPHAPGESAPPTRAGFVVSKAVGGAVVRNKVKRRLRHLMRDRVALLPPGSLVVVRALPGAGDADHAQLAQDLDAALQRLLGGGAR.

The protein belongs to the RnpA family. Consists of a catalytic RNA component (M1 or rnpB) and a protein subunit.

The enzyme catalyses Endonucleolytic cleavage of RNA, removing 5'-extranucleotides from tRNA precursor.. In terms of biological role, RNaseP catalyzes the removal of the 5'-leader sequence from pre-tRNA to produce the mature 5'-terminus. It can also cleave other RNA substrates such as 4.5S RNA. The protein component plays an auxiliary but essential role in vivo by binding to the 5'-leader sequence and broadening the substrate specificity of the ribozyme. In Streptomyces avermitilis (strain ATCC 31267 / DSM 46492 / JCM 5070 / NBRC 14893 / NCIMB 12804 / NRRL 8165 / MA-4680), this protein is Ribonuclease P protein component.